We begin with the raw amino-acid sequence, 425 residues long: Serine--tRNA ligase (425 aa).

Residues 108-134 (YPNLPSEACPDGRSEDDNKEVRRWGDP) form a disordered region. The span at 117-134 (PDGRSEDDNKEVRRWGDP) shows a compositional bias: basic and acidic residues. 233-235 (TAE) lines the L-serine pocket. 264–266 (RRE) serves as a coordination point for ATP. Glu-287 contributes to the L-serine binding site. An ATP-binding site is contributed by 351–354 (EISS). L-serine is bound at residue Ser-385.

Belongs to the class-II aminoacyl-tRNA synthetase family. Type-1 seryl-tRNA synthetase subfamily. Homodimer. The tRNA molecule binds across the dimer.

The protein localises to the cytoplasm. It catalyses the reaction tRNA(Ser) + L-serine + ATP = L-seryl-tRNA(Ser) + AMP + diphosphate + H(+). It carries out the reaction tRNA(Sec) + L-serine + ATP = L-seryl-tRNA(Sec) + AMP + diphosphate + H(+). It participates in aminoacyl-tRNA biosynthesis; selenocysteinyl-tRNA(Sec) biosynthesis; L-seryl-tRNA(Sec) from L-serine and tRNA(Sec): step 1/1. In terms of biological role, catalyzes the attachment of serine to tRNA(Ser). Is also able to aminoacylate tRNA(Sec) with serine, to form the misacylated tRNA L-seryl-tRNA(Sec), which will be further converted into selenocysteinyl-tRNA(Sec). This is Serine--tRNA ligase from Synechococcus sp. (strain CC9311).